A 1786-amino-acid chain; its full sequence is Transcription initiation factor TFIID subunit 1b (1786 aa).

2 disordered regions span residues 54–83 (EDYDEQGGQEKEHVPVEKSFDSEEREPVVL) and 350–372 (FGSRGSQSTNESTNKSRHHPQLL). A compositionally biased stretch (basic and acidic residues) spans 61–83 (GQEKEHVPVEKSFDSEEREPVVL). A compositionally biased stretch (polar residues) spans 352–362 (SRGSQSTNEST). Residues 574–650 (MTIVVKSLGG…VHLLRTKVHL (77 aa)) form the Ubiquitin-like domain. The span at 1303 to 1313 (MKTNKHCPKYR) shows a compositional bias: basic residues. Disordered regions lie at residues 1303–1382 (MKTN…DVAA), 1397–1471 (LKIS…KDQA), and 1596–1634 (SEREEEKRRKAKQKKKLQRGILENYPPRRNDGISSESGQ). The segment covering 1357 to 1377 (TKISVNEATKVGDSTSKTPGS) has biased composition (polar residues). A compositionally biased stretch (basic residues) spans 1397–1407 (LKISSKAKPKA). The span at 1433 to 1464 (HNPSVSGQLLPSTETDQAASSRYTTSVPQPSL) shows a compositional bias: polar residues. 2 coiled-coil regions span residues 1591–1620 (REVIRSEREEEKRRKAKQKKKLQRGILENY) and 1752–1786 (LADELLVKCDRLLDEYRDELKEAEKGIVDSSDSLR). Basic residues predominate over residues 1604 to 1613 (RKAKQKKKLQ). Residues 1656–1774 (KRRKKGQVGL…DEYRDELKEA (119 aa)) form the Bromo domain.

Belongs to the TAF1 family. As to quaternary structure, component of the TFIID complex. TFIID is composed of TATA binding protein (TBP) and a number of TBP-associated factors (TAFs) whose MWs range from 14-217 kDa. In terms of tissue distribution, expressed in roots, shoots, leaves and inflorescences.

It localises to the nucleus. In terms of biological role, TAFs are components of the transcription factor IID (TFIID) complex that is essential for mediating regulation of RNA polymerase transcription. Core scaffold of the TFIID complex. Acts as a histone acetyltransferase involved in the light regulation of growth and gene expression. Required for H3K9, H3K27, and H4K12 acetylation on the target promoters. This is Transcription initiation factor TFIID subunit 1b (TAF1B) from Arabidopsis thaliana (Mouse-ear cress).